Reading from the N-terminus, the 449-residue chain is Malonyl-CoA:anthocyanidin 5-O-glucoside-6''-O-malonyltransferase (449 aa).

Met1 carries the N-acetylmethionine modification. Residues His162 and Asp394 each act as proton acceptor in the active site.

The protein belongs to the plant acyltransferase family. As to expression, expressed in flowers. Detected in leaves, stems, roots and siliques.

It catalyses the reaction anthocyanin A3 + malonyl-CoA = anthocyanin A5 + CoA. It carries out the reaction anthocyanin A7 + malonyl-CoA = anthocyanin A9 + CoA. The enzyme catalyses anthocyanin A6 + malonyl-CoA = anthocyanin A8 + CoA. The catalysed reaction is anthocyanin A10 + malonyl-CoA = anthocyanin A11 + CoA. Catalyzes the malonylation of the 5-O-glucose residue of anthocyanins, using malonyl-CoA as the malonyl donor. Acts only on anthocyanin substrates containing a 5-O-glucosyl moiety. Acts on the four native A.thaliana anthocyanins, A3, A7, and to a lesser extent, A6 and A10. Can also use the non-native anthocyanin compounds cyanin (cyanidin 3,5-diglucoside), malvin, pelargonidin 3,5-diglucoside, peonidin 3,5-diglucoside, cyanidin 3-coumaroylglucoside 5-glucoside, delphinidin 3-coumaroylrutinoside 5-glucoside and petunidin 3-coumaroylrutinoside 5-glucoside as substrates. Is the sole enzyme responsible for producing malonylated anthocyanin 5-O-glucosides in A.thaliana. Is not able to catalyze acyl transfer using acetyl-CoA, butyryl-CoA, hexanoyl-CoA, benzoyl-CoA, cinnamoyl-CoA, methylmalonyl-CoA, succinyl-CoA, p-coumaroyl-CoA or caffeoyl-CoA. The chain is Malonyl-CoA:anthocyanidin 5-O-glucoside-6''-O-malonyltransferase (5MAT) from Arabidopsis thaliana (Mouse-ear cress).